A 587-amino-acid chain; its full sequence is Urease subunit alpha (587 aa).

The Urease domain maps to glycine 134–threonine 572. Ni(2+) contacts are provided by histidine 139, histidine 141, and lysine 222. The residue at position 222 (lysine 222) is an N6-carboxylysine. Histidine 224 is a substrate binding site. 2 residues coordinate Ni(2+): histidine 251 and histidine 277. Catalysis depends on histidine 325, which acts as the Proton donor. Residue aspartate 365 participates in Ni(2+) binding.

The protein belongs to the metallo-dependent hydrolases superfamily. Urease alpha subunit family. Heterotrimer of UreA (gamma), UreB (beta) and UreC (alpha) subunits. Three heterotrimers associate to form the active enzyme. Requires Ni cation as cofactor. Post-translationally, carboxylation allows a single lysine to coordinate two nickel ions.

Its subcellular location is the cytoplasm. The enzyme catalyses urea + 2 H2O + H(+) = hydrogencarbonate + 2 NH4(+). The protein operates within nitrogen metabolism; urea degradation; CO(2) and NH(3) from urea (urease route): step 1/1. The sequence is that of Urease subunit alpha from Clostridium perfringens.